A 373-amino-acid polypeptide reads, in one-letter code: UBX domain-containing protein 1 (373 aa).

2 disordered regions span residues 39–179 (VTEF…QIPR) and 236–293 (IKQH…VDES). The span at 49–59 (TAGSSEPTGQP) shows a compositional bias: polar residues. 2 stretches are compositionally biased toward low complexity: residues 60-71 (SAKSSSSTPRES) and 85-94 (LGDLASGAAD). Over residues 95–104 (SSDDDDDENQ) the composition is skewed to acidic residues. Positions 121–132 (DDLKKKIIEKAR) are enriched in basic and acidic residues. Positions 185–258 (LHFWADGFSV…KYQPFAGKGQ (74 aa)) constitute an SEP domain. In terms of domain architecture, UBX spans 292–369 (ESQPVVTLQI…PEFKRGGVVV (78 aa)).

Its function is as follows. Involved in CDC48-dependent protein degradation through the ubiquitin/proteasome pathway. In Emericella nidulans (strain FGSC A4 / ATCC 38163 / CBS 112.46 / NRRL 194 / M139) (Aspergillus nidulans), this protein is UBX domain-containing protein 1 (ubx1).